The primary structure comprises 177 residues: uncharacterized protein (177 aa).

The segment at 1–27 is disordered; the sequence is MSHSRRAAPTQDQCHTPGFPTSRETSG.

This is an uncharacterized protein from Homo sapiens (Human).